The sequence spans 138 residues: ATP synthase subunit g, mitochondrial (138 aa).

This sequence belongs to the ATPase g subunit family. As to quaternary structure, F-type ATP synthases have 2 components, the catalytic core F(1) and the membrane-embedded component F(0), linked together by a central stalk and a peripheral stalk. The central stalk, also called rotor shaft, is often seen as part of F(1). The peripheral stalk is seen as part of F(0). F(0) contains the membrane channel next to the rotor. F-type ATP synthases form dimers but each monomer functions independently in ATP generation. The dimer consists of 17 different polypeptides: ATP1 (subunit alpha, 3 molecules per monomer, part of F(1)), ATP2 (subunit beta, 3 copies per monomer, part of F(1)), ATP3 (subunit gamma, part of the central stalk), ATP4 (subunit b, part of the peripheral stalk), ATP5/OSCP (subunit 5/OSCP, part of the peripheral stalk), ATP6 (subunit a, part of the peripheral stalk), ATP7 (subunit d, part of the peripheral stalk), ATP8 (subunit 8, part of the peripheral stalk), OLI1 (subunit c, part of the rotor, 10 molecules per monomer), ATP14 (subunit h, part of the peripheral stalk), ATP15 (subunit epsilon, part of the central stalk), ATP16 (subunit delta, part of the central stalk), ATP17 (subunit f, part of the peripheral stalk), ATP18 (subunit i/j, part of the peripheral stalk), ATP19 (subunit k, dimer-specific, at interface between monomers), ATP20 (subunit g, at interface between monomers), TIM11 (subunit e, at interface between monomers).

The protein localises to the mitochondrion inner membrane. Its function is as follows. Mitochondrial membrane ATP synthase (F(1)F(0) ATP synthase or Complex V) produces ATP from ADP in the presence of a proton gradient across the membrane which is generated by electron transport complexes of the respiratory chain. F-type ATP synthases consist of two structural domains, F(1) - containing the extramembraneous catalytic core, and F(0) - containing the membrane proton channel, linked together by a central stalk and a peripheral stalk. During catalysis, ATP synthesis in the catalytic domain of F(1) is coupled via a rotary mechanism of the central stalk subunits to proton translocation. Part of the complex F(0) domain. Minor subunit located with subunit a/ATP6 in the membrane. Together with subunit e/TIM11, probably contributes to membrane curvature at the site of the ATP synthase dimer, ultimately contributing to formation of cristae. This Yarrowia lipolytica (strain CLIB 122 / E 150) (Yeast) protein is ATP synthase subunit g, mitochondrial.